A 366-amino-acid polypeptide reads, in one-letter code: Dof zinc finger protein DOF1.3 (366 aa).

The disordered stretch occupies residues aspartate 22–lysine 103. 2 stretches are compositionally biased toward low complexity: residues serine 25–leucine 45 and threonine 56–asparagine 69. Basic and acidic residues-rich tracts occupy residues glutamate 70 to serine 83 and glutamate 91 to lysine 103. Residues leucine 105–glycine 159 form a Dof-type zinc finger. Positions 107, 110, 132, and 135 each coordinate Zn(2+).

Its subcellular location is the nucleus. Its function is as follows. Transcription factor that binds specifically to a 5'-AA[AG]G-3' consensus core sequence. In Arabidopsis thaliana (Mouse-ear cress), this protein is Dof zinc finger protein DOF1.3 (DOF1.3).